A 458-amino-acid chain; its full sequence is Flavonol 3-O-glucosyltransferase F3GT2 (458 aa).

His20 (proton acceptor) is an active-site residue. Residue His20 coordinates an anthocyanidin. Asp119 (charge relay) is an active-site residue. A UDP-alpha-D-glucose-binding site is contributed by Thr141. His150 is a binding site for an anthocyanidin. Residues Ala333, Gln335, His350, Trp353, Asn354, Ser355, and Glu358 each coordinate UDP-alpha-D-glucose. Position 373 (Gly373) interacts with an anthocyanidin. Positions 374 and 375 each coordinate UDP-alpha-D-glucose.

It belongs to the UDP-glycosyltransferase family. As to expression, expressed in ovaries.

The catalysed reaction is a flavonol + UDP-alpha-D-glucose = a flavonol 3-O-beta-D-glucoside + UDP + H(+). It functions in the pathway flavonoid metabolism. Its function is as follows. Catalyzes the glucosylation of quercetin. Preferentially uses UDP-glucose as sugar donor, but is also able to use UDP-gal and UDP-xyl. Is probably not required for the accumulation of anthocyanin in red-fleshed kiwifruit varieties. The polypeptide is Flavonol 3-O-glucosyltransferase F3GT2 (Actinidia chinensis var. chinensis (Chinese soft-hair kiwi)).